A 445-amino-acid polypeptide reads, in one-letter code: Ribosome biogenesis protein YTM1 (445 aa).

The tract at residues 8–89 is ubiquitin-like (UBL) domain; it reads VKVKFFTREQ…EAVLNVEYTR (82 aa). The interval 99-445 is sufficient for interaction with ERB1 and association with 66S pre-ribosomes; that stretch reads SFSNEDWVSA…FNKGDNIFKN (347 aa). 7 WD repeats span residues 101–138, 140–178, 195–232, 270–310, 312–351, 358–398, and 409–445; these read SNEDWVSALDVGAERIVSGSYDGVVRTWNLSGKIEKQY, GHTGAVRAVKFISSTRLVSGGNDRTLRLWKTKNDDVKHV, GHQAPVVSVDVQGDRILSASYDNSIGFWSTNHKDMTAV, SHKA…CVDT, STSYSLLSMVELPKLRLLACGSSARHITLHDPRADSSAKI, GHKN…SIYT, and GINDKVFAVKWAKGVGIISGGQDKKIQFNKGDNIFKN.

This sequence belongs to the WD repeat WDR12/YTM1 family. In terms of assembly, component of the NOP7 complex, composed of ERB1, NOP7 and YTM1. The complex is held together by ERB1, which interacts with NOP7 via its N-terminal domain and with YTM1 via a high-affinity interaction between the seven-bladed beta-propeller domains of the 2 proteins. The NOP7 complex associates with the 66S pre-ribosome. Interacts (via UBL domain) with MDN1 (via VWFA/MIDAS domain).

The protein resides in the nucleus. The protein localises to the nucleolus. It is found in the nucleoplasm. Component of the NOP7 complex, which is required for maturation of the 25S and 5.8S ribosomal RNAs and formation of the 60S ribosome. This is Ribosome biogenesis protein YTM1 from Eremothecium gossypii (strain ATCC 10895 / CBS 109.51 / FGSC 9923 / NRRL Y-1056) (Yeast).